The following is a 312-amino-acid chain: DNA-directed RNA polymerase subunit alpha (312 aa).

Positions 1–226 (MIEFEKPIIT…EHLNLFTDLT (226 aa)) are alpha N-terminal domain (alpha-NTD). Residues 243–312 (DEKVLDRTIE…DLGLGLKNDK (70 aa)) are alpha C-terminal domain (alpha-CTD).

This sequence belongs to the RNA polymerase alpha chain family. Homodimer. The RNAP catalytic core consists of 2 alpha, 1 beta, 1 beta' and 1 omega subunit. When a sigma factor is associated with the core the holoenzyme is formed, which can initiate transcription.

The catalysed reaction is RNA(n) + a ribonucleoside 5'-triphosphate = RNA(n+1) + diphosphate. Its function is as follows. DNA-dependent RNA polymerase catalyzes the transcription of DNA into RNA using the four ribonucleoside triphosphates as substrates. This is DNA-directed RNA polymerase subunit alpha from Streptococcus pyogenes serotype M3 (strain ATCC BAA-595 / MGAS315).